The chain runs to 194 residues: Ancillary SecYEG translocon subunit (194 aa).

The Cytoplasmic portion of the chain corresponds to 1–10 (MHLNKMKKVS). The helical transmembrane segment at 11 to 31 (LKTYLVLFFLIFFIFCSFWFI) threads the bilayer. Residues 32–194 (KPKEKKLKLE…INMKINEIKR (163 aa)) lie on the Periplasmic side of the membrane.

It belongs to the YfgM family. Interacts with the SecYEG translocon. Forms a complex with PpiD.

It is found in the cell inner membrane. Its function is as follows. May mediate protein transfer from the SecYEG translocon to the periplasmic chaperone network via its periplasmic C-terminal region. In Buchnera aphidicola subsp. Schizaphis graminum (strain Sg), this protein is Ancillary SecYEG translocon subunit.